We begin with the raw amino-acid sequence, 260 residues long: Global transcriptional regulator CodY (260 aa).

Positions M1–L159 are GAF domain. Positions A207–R226 form a DNA-binding region, H-T-H motif.

Belongs to the CodY family.

Its subcellular location is the cytoplasm. Functionally, DNA-binding global transcriptional regulator which is involved in the adaptive response to starvation and acts by directly or indirectly controlling the expression of numerous genes in response to nutrient availability. During rapid exponential growth, CodY is highly active and represses genes whose products allow adaptation to nutrient depletion. This chain is Global transcriptional regulator CodY, found in Streptococcus equi subsp. equi (strain 4047).